The chain runs to 268 residues: Forkhead box protein R1 (268 aa).

A disordered region spans residues Glu91 to Arg126. Residues Arg149–Gln248 constitute a DNA-binding region (fork-head).

In terms of tissue distribution, expressed in adult germ cells (at protein level). Expressed in heart, liver, lung and embryonic brain.

Its subcellular location is the nucleus. It is found in the cytoplasm. The protein localises to the perinuclear region. Its function is as follows. Transcription factor which acts as both an activator and a repressor. Activates transcription of a number of genes including the heat shock chaperones HSPA1A and HSPA6 and the antioxidant NADPH-dependent reductase DHRS2 which are involved in protection against oxidative stress. Required for normal brain development. The sequence is that of Forkhead box protein R1 (Foxr1) from Mus musculus (Mouse).